We begin with the raw amino-acid sequence, 274 residues long: Putative pyruvate, phosphate dikinase regulatory protein (274 aa).

149–156 (GVSRSSKT) contributes to the ADP binding site.

This sequence belongs to the pyruvate, phosphate/water dikinase regulatory protein family. PDRP subfamily.

It catalyses the reaction N(tele)-phospho-L-histidyl/L-threonyl-[pyruvate, phosphate dikinase] + ADP = N(tele)-phospho-L-histidyl/O-phospho-L-threonyl-[pyruvate, phosphate dikinase] + AMP + H(+). The catalysed reaction is N(tele)-phospho-L-histidyl/O-phospho-L-threonyl-[pyruvate, phosphate dikinase] + phosphate + H(+) = N(tele)-phospho-L-histidyl/L-threonyl-[pyruvate, phosphate dikinase] + diphosphate. Bifunctional serine/threonine kinase and phosphorylase involved in the regulation of the pyruvate, phosphate dikinase (PPDK) by catalyzing its phosphorylation/dephosphorylation. This Rhizorhabdus wittichii (strain DSM 6014 / CCUG 31198 / JCM 15750 / NBRC 105917 / EY 4224 / RW1) (Sphingomonas wittichii) protein is Putative pyruvate, phosphate dikinase regulatory protein.